We begin with the raw amino-acid sequence, 166 residues long: Transcriptional repressor NrdR (166 aa).

A zinc finger spans residues 3–34 (CPFCHFVETDVIDTRKLYEGEVIRRRRRCRAC). One can recognise an ATP-cone domain in the interval 49–139 (LMVVKKDGTR…VYRAFTDIGK (91 aa)).

It belongs to the NrdR family. Zn(2+) is required as a cofactor.

Negatively regulates transcription of bacterial ribonucleotide reductase nrd genes and operons by binding to NrdR-boxes. This Chloroflexus aurantiacus (strain ATCC 29364 / DSM 637 / Y-400-fl) protein is Transcriptional repressor NrdR.